Here is a 298-residue protein sequence, read N- to C-terminus: GTP cyclohydrolase FolE2 (298 aa).

This sequence belongs to the GTP cyclohydrolase IV family.

It catalyses the reaction GTP + H2O = 7,8-dihydroneopterin 3'-triphosphate + formate + H(+). The protein operates within cofactor biosynthesis; 7,8-dihydroneopterin triphosphate biosynthesis; 7,8-dihydroneopterin triphosphate from GTP: step 1/1. Converts GTP to 7,8-dihydroneopterin triphosphate. The protein is GTP cyclohydrolase FolE2 of Pseudomonas fluorescens (strain Pf0-1).